The chain runs to 1218 residues: MLTKFETKSNRVKGLSFHPKRPWILASLHSGVIQLWDYRMGTLIDRFDEHEGPVRGVHFHNSQPLFVSGGDDYKIKVWNYKTHRCLFTLLGHLDYIRTVQFHHENPWIVSASDDQTIRIWNWQSRTCISVLTGHNHYVMCASFHPKEDLVVSASLDQTVRVWDIGALKKKSASPADDLMRFSQMNSDLFGGVDAIVKYVLEGHDRGVNWASFHPTLPLIVSGADDRQVKLWRMNETKAWEVDTLRGHMNNVSSVMFHAKQDIIVSNSEDKSIRVWDATKRTGIQTFRREHDRFWILAVHPEINLLAAGHDNGMIVFKLERERPAFALSGDSLFYAKDRFLRYYEYSTQKDSQVIPIRRPGTPSLNQSPRTLSYSPTENAVLICSDLDGGSYELYIIPKDSVGRSDVVQDAKRGTGGSAVFIARNRFAVLEKSTSQVLVKNLKNEVVKKSSLPIPTDAIFYAGTGNLLCRSEDKVVIFDLQQRLVLGELQTPFVRYVVWSNDMESVALLSKHTIIIASKKLVLQCTLHETIRVKSGAWDDNGVFIYTTLNHIKYCLPNGDSGIIRTLDVPIYITKVSGNTIFCLDRDGKNRAITINATEYIFKLALLRKKYDHVMSMIKNSQLCGQAMIAYLQQKGFPEVALHFVEDERIRFNLALESGNISVAVASATEINEKDHWYRLGVEALRQGNSRIVEFAYQQTKNFERLSFLYLITGNLDKLSKLMKIAEVKNNVMGQFHNALYLGDVKERVKILENAGHLPLAYITASVHGLTDIAERLAIELGDNVPSLPEGKTPSLLMPPSPIMCGGDWPLLRVMKGIFEGGLESANRGAVDEEEEDVEGDWGEGLDKFDVDGMENTDIEAILDGAEAGEEEDDEEGGWGLDLDLPPELDTPKASANARSSTFVTPPQGMPVSQIWSQKSSLAAEQAAAGSFDTAMRLLHRQLGIKNFAPLKSMFLDLFSGSHSYLRAFSSSPVVPLAIERGWSESSSPNVRGPPALVFDFSQLEAKLKSGYKATTAGKLSEALRVFLSILQTIPLVVVESRREVDEVKELVIIVKEYVLGLQLELKRREMKDDPVRQQELAAYFTHCKLQTPHLRLAYFSAMTVCYKSKNMATAAHFARSLLDTNPTIESQARTARQVMQAAERNMTDATTLNYDFRNPFVICGSTYVPIYKGQKDVACPYCTARFVPSQEGNICSVCDLAVIGADASGLLCSASQVR.

WD repeat units follow at residues 7–48, 49–88, 91–132, 133–172, 202–241, 246–285, 288–326, and 363–404; these read TKSN…DRFD, EHEGPVRGVHFHNSQPLFVSGGDDYKIKVWNYKTHRCLFT, GHLD…SVLT, GHNHYVMCASFHPKEDLVVSASLDQTVRVWDIGALKKKSA, GHDRGVNWASFHPTLPLIVSGADDRQVKLWRMNETKAWEV, GHMNNVSSVMFHAKQDIIVSNSEDKSIRVWDATKRTGIQT, REHDRFWILAVHPEINLLAAGHDNGMIVFKLERERPAFA, and SLNQ…VGRS. The tract at residues 826 to 849 is disordered; that stretch reads NRGAVDEEEEDVEGDWGEGLDKFD. A compositionally biased stretch (acidic residues) spans 831–843; that stretch reads DEEEEDVEGDWGE.

As to quaternary structure, oligomeric complex that consists of at least the alpha, beta, beta', gamma, delta, epsilon and zeta subunits.

Its subcellular location is the cytoplasm. It is found in the golgi apparatus membrane. The protein localises to the cytoplasmic vesicle. It localises to the COPI-coated vesicle membrane. Its function is as follows. The coatomer is a cytosolic protein complex that binds to dilysine motifs and reversibly associates with Golgi non-clathrin-coated vesicles, which further mediate biosynthetic protein transport from the ER, via the Golgi up to the trans Golgi network. Coatomer complex is required for budding from Golgi membranes, and is essential for the retrograde Golgi-to-ER transport of dilysine-tagged proteins. In Arabidopsis thaliana (Mouse-ear cress), this protein is Coatomer subunit alpha-2.